The following is a 194-amino-acid chain: Histone H1.0 (194 aa).

An N-acetylmethionine modification is found at Met-1. Residues 1 to 11 (MTENSTSTPAA) are compositionally biased toward low complexity. Residues 1 to 29 (MTENSTSTPAAKPKRAKASKKSTDHPKYS) are disordered. Position 2 is an N-acetylthreonine; in Histone H1.0, N-terminally processed (Thr-2). Positions 24 to 97 (DHPKYSDMIV…GASGSFRLAK (74 aa)) constitute an H15 domain. Residue Arg-42 is modified to Citrulline. Residues 83–194 (QTKGVGASGS…SSAKRTGKKK (112 aa)) are disordered. Ser-104 is modified (ADP-ribosylserine). The segment covering 105–194 (VAFKKTKKEV…SSAKRTGKKK (90 aa)) has biased composition (basic residues).

The protein belongs to the histone H1/H5 family. ADP-ribosylated on Ser-104 in response to DNA damage.

The protein localises to the nucleus. The protein resides in the chromosome. In terms of biological role, histones H1 are necessary for the condensation of nucleosome chains into higher-order structures. The histones H1.0 are found in cells that are in terminal stages of differentiation or that have low rates of cell division. This Bos taurus (Bovine) protein is Histone H1.0 (H1-0).